Reading from the N-terminus, the 809-residue chain is DNA replication helicase (809 aa).

Position 72 to 79 (72 to 79 (GTAGAGKS)) interacts with ATP.

Belongs to the herpesviridae helicase family. Associates with the primase and the primase-associated factor to form the helicase-primase complex.

It is found in the host nucleus. Component of the helicase/primase complex. Unwinds the DNA at the replication forks and generates single-stranded DNA for both leading and lagging strand synthesis. The primase synthesizes short RNA primers on the lagging strand that the polymerase elongates using dNTPs. Possesses helicase-like motifs and therefore may act as the helicase subunit of the complex. In Epstein-Barr virus (strain B95-8) (HHV-4), this protein is DNA replication helicase.